A 421-amino-acid polypeptide reads, in one-letter code: Testin (421 aa).

A PET domain is found at 92 to 199; it reads MILTNPVAAK…GDVKLPREMD (108 aa). A disordered region spans residues 133 to 164; that stretch reads EKQPVAGSEGAQYRKKQLAKQLPAHDQDPSKC. The span at 155 to 164 shows a compositional bias: basic and acidic residues; the sequence is PAHDQDPSKC. 3 consecutive LIM zinc-binding domains span residues 234–297, 299–359, and 362–421; these read YSCY…CDSE, PRCA…NHAV, and QGCH…KMMS.

It belongs to the prickle / espinas / testin family. Interacts via LIM domain 1 with ZYX. Interacts (via LIM domain 3) with ENAH and VASP. Interacts with ALKBH4, talin, actin, alpha-actinin, GRIP1 and PXN. Interacts (via LIM domain 2) with ACTL7A (via N-terminus). Heterodimer with ACTL7A; the heterodimer interacts with ENAH to form a heterotrimer.

It localises to the cytoplasm. The protein resides in the cell junction. Its subcellular location is the focal adhesion. Scaffold protein that may play a role in cell adhesion, cell spreading and in the reorganization of the actin cytoskeleton. Plays a role in the regulation of cell proliferation. May act as a tumor suppressor. The polypeptide is Testin (TES) (Mustela putorius furo (European domestic ferret)).